Consider the following 121-residue polypeptide: Large ribosomal subunit protein uL14c (121 aa).

It belongs to the universal ribosomal protein uL14 family. As to quaternary structure, part of the 50S ribosomal subunit.

It localises to the plastid. The protein localises to the chloroplast. Binds to 23S rRNA. The polypeptide is Large ribosomal subunit protein uL14c (Pelargonium hortorum (Common geranium)).